The following is a 505-amino-acid chain: Glycerol kinase (505 aa).

Position 12 (Thr12) interacts with ADP. Residues Thr12, Thr13, and Ser14 each coordinate ATP. A sn-glycerol 3-phosphate-binding site is contributed by Thr12. Arg16 contributes to the ADP binding site. Sn-glycerol 3-phosphate is bound by residues Arg82, Glu83, Tyr134, and Asp249. Glycerol contacts are provided by Arg82, Glu83, Tyr134, Asp249, and Gln250. The ADP site is built by Thr271 and Gly315. ATP contacts are provided by Thr271, Gly315, Gln319, and Gly416. ADP contacts are provided by Gly416 and Asn420.

Belongs to the FGGY kinase family.

The catalysed reaction is glycerol + ATP = sn-glycerol 3-phosphate + ADP + H(+). It participates in polyol metabolism; glycerol degradation via glycerol kinase pathway; sn-glycerol 3-phosphate from glycerol: step 1/1. With respect to regulation, inhibited by fructose 1,6-bisphosphate (FBP). Functionally, key enzyme in the regulation of glycerol uptake and metabolism. Catalyzes the phosphorylation of glycerol to yield sn-glycerol 3-phosphate. The polypeptide is Glycerol kinase (Mycolicibacterium vanbaalenii (strain DSM 7251 / JCM 13017 / BCRC 16820 / KCTC 9966 / NRRL B-24157 / PYR-1) (Mycobacterium vanbaalenii)).